Consider the following 266-residue polypeptide: MATTKTSIATLQKMKREGTKISSLTAYDSSFAKLMTEQGVDFILVGDSLGNVVQGRDSTVPVTVDDMIYHTQCVRRGASNAFVIADMPFMTYSTPEQAYDVAAALMQAGANMVKLEGGHWLVETIEGLKTRGIPVCAHLGLLPQSVNVLGGYKVQGKEQQQADDTLNQALALEQAGAQLLVLECVPASLGKRITEQLSIPTIGIGAGADTDGQILVMHDMLGMNSDYLPKFAKDFLAQGGSLADAFRLYSEQVRSGEFPTAEHSYK.

Residues D47 and D86 each contribute to the Mg(2+) site. 3-methyl-2-oxobutanoate is bound by residues 47 to 48 (DS), D86, and K114. Residue E116 coordinates Mg(2+). E183 functions as the Proton acceptor in the catalytic mechanism.

The protein belongs to the PanB family. As to quaternary structure, homodecamer; pentamer of dimers. The cofactor is Mg(2+).

It is found in the cytoplasm. The enzyme catalyses 3-methyl-2-oxobutanoate + (6R)-5,10-methylene-5,6,7,8-tetrahydrofolate + H2O = 2-dehydropantoate + (6S)-5,6,7,8-tetrahydrofolate. Its pathway is cofactor biosynthesis; (R)-pantothenate biosynthesis; (R)-pantoate from 3-methyl-2-oxobutanoate: step 1/2. Functionally, catalyzes the reversible reaction in which hydroxymethyl group from 5,10-methylenetetrahydrofolate is transferred onto alpha-ketoisovalerate to form ketopantoate. The protein is 3-methyl-2-oxobutanoate hydroxymethyltransferase of Idiomarina loihiensis (strain ATCC BAA-735 / DSM 15497 / L2-TR).